We begin with the raw amino-acid sequence, 394 residues long: Guanine nucleotide-binding protein G(s) subunit alpha isoforms short (394 aa).

Positions Met1–Asn23 are disordered. Gly2 carries N-palmitoyl glycine lipidation. Cys3 is lipidated: S-palmitoyl cysteine. Basic and acidic residues predominate over residues Lys8–Asn23. A G-alpha domain is found at Ala39–Leu394. Positions Arg42–Thr55 are G1 motif. Gly47–Thr55 contributes to the GTP binding site. Mg(2+) is bound at residue Ser54. Residues Phe68–Thr90 form a disordered region. Residues Asp196–Thr204 form a G2 motif region. Residues Leu197–Thr204, Asp223–Gln227, and Asn292–Asp295 contribute to the GTP site. Residue Thr204 coordinates Mg(2+). The segment at Phe219 to Arg228 is G3 motif. The G4 motif stretch occupies residues Ile288–Asp295. Residue Lys300 forms a Glycyl lysine isopeptide (Lys-Gly) (interchain with G-Cter in ubiquitin) linkage. Position 352 is a phosphoserine (Ser352). The segment at Thr364–Thr369 is G5 motif. Position 366 (Ala366) interacts with GTP.

The protein belongs to the G-alpha family. G(s) subfamily. As to quaternary structure, heterotrimeric G proteins are composed of 3 units; alpha, beta and gamma. The alpha chain contains the guanine nucleotide binding site. Component of the TAS2R14-GNAS2 complex, consisting of TAS2R14, GNAS2, GNB1 and GNG2; within the complex interacts with TAS2R14; this complex plays a role in the perception of bitterness. Interacts with CRY1; the interaction may block GPCR-mediated regulation of cAMP concentrations. Interacts with ADCY6 and stimulates its adenylyl cyclase activity. Interacts with ADCY2 and ADCY5. Interacts (GDP-bound form) with RIC8B; promoting GNAS folding and association with the plasma membrane. Stimulates the ADCY5 adenylyl cyclase activity. Interaction with SASH1. Interacts with GASL2L2.

It localises to the cell membrane. It carries out the reaction GTP + H2O = GDP + phosphate + H(+). Functionally, guanine nucleotide-binding proteins (G proteins) function as transducers in numerous signaling pathways controlled by G protein-coupled receptors (GPCRs). The alpha chain contains the guanine nucleotide binding site and alternates between an active, GTP-bound state and an inactive, GDP-bound state. Signaling by an activated GPCR promotes GDP release and GTP binding. The alpha subunit has a low GTPase activity that converts bound GTP to GDP, thereby terminating the signal. Both GDP release and GTP hydrolysis are modulated by numerous regulatory proteins. Signaling involves the activation of adenylyl cyclases, resulting in increased levels of the signaling molecule cAMP. Functions downstream of beta-adrenergic receptors. Stimulates the Ras signaling pathway via RAPGEF2. The polypeptide is Guanine nucleotide-binding protein G(s) subunit alpha isoforms short (Gnas) (Mus musculus (Mouse)).